A 217-amino-acid polypeptide reads, in one-letter code: CD99 antigen-like protein 2 (217 aa).

The N-terminal stretch at 1-25 is a signal peptide; it reads MVAWRWACLICLAFSLTTLVQRGSG. Over 26–141 the chain is Extracellular; sequence DTGGFRLEDA…DDSGMSAETG (116 aa). The interval 36–136 is disordered; it reads VEGTSSVKQR…GGDNSDDSGM (101 aa). The span at 50-64 shows a compositional bias: low complexity; the sequence is TTTTRRPGATRAPAK. The segment covering 70 to 82 has biased composition (acidic residues); it reads AEDDFNLADALDD. The segment covering 83-92 has biased composition (basic and acidic residues); it reads QNDRDHDRKK. Serine 134 is a glycosylation site (O-linked (Xyl...) (chondroitin sulfate) serine). The helical transmembrane segment at 142 to 162 threads the bilayer; the sequence is TIAGVASALAMALIGAVSSYI. At 163-217 the chain is on the cytoplasmic side; the sequence is SYQQKKFCFSIQQGLNADYVKGENLEAVVCEEPQVKYSALQTQSTEPPPPEPPRI.

It belongs to the CD99 family. In terms of processing, O-glycosylated.

It localises to the cell membrane. The protein localises to the cell junction. Its subcellular location is the secreted. Its function is as follows. Plays a role in a late step of leukocyte extravasation helping cells to overcome the endothelial basement membrane. Acts at the same site as, but independently of, PECAM1. Homophilic adhesion molecule, but these interactions may not be required for cell aggregation. This chain is CD99 antigen-like protein 2 (CD99L2), found in Bos taurus (Bovine).